Reading from the N-terminus, the 477-residue chain is Argininosuccinate synthase (477 aa).

Residues 17–25 (AFSGGLDTS) and Ala43 each bind ATP. Tyr99 is a binding site for L-citrulline. Residues Gly129 and Thr131 each contribute to the ATP site. 3 residues coordinate L-aspartate: Thr131, Asn135, and Asp136. Asn135 contacts L-citrulline. An ATP-binding site is contributed by Asp136. 2 residues coordinate L-citrulline: Arg139 and Ser192. Asp194 provides a ligand contact to ATP. L-citrulline is bound by residues Thr201, Glu203, and Glu280. The interval 450–477 (DQITENPEVQAEPEEEALDAAAMEAGTD) is disordered. Low complexity predominate over residues 468-477 (DAAAMEAGTD).

This sequence belongs to the argininosuccinate synthase family. Type 2 subfamily. In terms of assembly, homotetramer.

It is found in the cytoplasm. It carries out the reaction L-citrulline + L-aspartate + ATP = 2-(N(omega)-L-arginino)succinate + AMP + diphosphate + H(+). The protein operates within amino-acid biosynthesis; L-arginine biosynthesis; L-arginine from L-ornithine and carbamoyl phosphate: step 2/3. The protein is Argininosuccinate synthase of Nocardioides sp. (strain ATCC BAA-499 / JS614).